The chain runs to 605 residues: Dynein axonemal intermediate chain 2 (605 aa).

WD repeat units follow at residues 150–203, 208–246, 253–294, 301–347, 355–393, 399–437, and 443–481; these read KTIN…IWDL, KPELALKPSSPLVTLEFNPKDSHVLLGGCYNGQIACWDT, AELS…WWDI, TEVV…SCNR, KIVCTFPGHHGPIYALQRNPFYPKNFLTVGDWTARIWSE, SIMWTKYHMAYLTDAAWSPVRPTVFFTTRMDGTLDIWDF, and DPTLSLKVCDEALFCLRVQDNGCLIACGSQLGTTTLLEV. The segment at 568–605 is disordered; it reads IKLTPVPQQPSPEEDQVVEEGEEAAGEEGDEEVEEDLA. The segment covering 579-605 has biased composition (acidic residues); it reads PEEDQVVEEGEEAAGEEGDEEVEEDLA.

This sequence belongs to the dynein intermediate chain family. As to quaternary structure, consists of at least two heavy chains and a number of intermediate and light chains. Interacts with DNAAF2. Interacts with DNAAF6/PIH1D3. Interacts with HEATR2; probably involved in outer arm dynein assembly. Interacts with CFAP53. In terms of tissue distribution, highly expressed in trachea and testis. Expressed in respiratory ciliated cells (at protein level).

It localises to the cytoplasm. It is found in the cytoskeleton. The protein resides in the cilium axoneme. Its subcellular location is the dynein axonemal particle. Functionally, part of the dynein complex of respiratory cilia. This Homo sapiens (Human) protein is Dynein axonemal intermediate chain 2.